The chain runs to 238 residues: Bacterial microcompartment shell protein PduB (238 aa).

2 consecutive BMC circularly permuted domains span residues 14-125 and 126-225; these read FVGA…VYNA and KAGH…LSQF. Cysteines 158 and 197 form a disulfide.

This sequence belongs to the EutL/PduB family. As to quaternary structure, homotrimerizes to form a pseudohexamer with a central pore 7.5 Angstroms wide and 22 Angstroms long; the pore channel in the crystal binds up to 4 glycerol molecules. A disulfide bond forms in the pore, it is not clear if this is an artifact. The trimers pack into an array.

The protein resides in the bacterial microcompartment. It participates in polyol metabolism; 1,2-propanediol degradation. One of the major shell proteins of the bacterial microcompartment (BMC) dedicated to 1,2-propanediol (1,2-PD) degradation. Probably involved in a propanediol fermentation/reuterin formation pathway. The sequence is that of Bacterial microcompartment shell protein PduB from Limosilactobacillus reuteri (strain DSM 20016) (Lactobacillus reuteri).